The chain runs to 129 residues: Follitropin subunit beta (129 aa).

Residues 1–20 (MKTVQFCFLFCCWKAICCNS) form the signal peptide. Cystine bridges form between cysteine 21–cysteine 69, cysteine 35–cysteine 84, cysteine 38–cysteine 122, cysteine 46–cysteine 100, cysteine 50–cysteine 102, and cysteine 105–cysteine 112. Asparagine 25 and asparagine 42 each carry an N-linked (GlcNAc...) asparagine glycan.

It belongs to the glycoprotein hormones subunit beta family. Heterodimer. The active follitropin is a heterodimer composed of an alpha chain/CGA shared with other hormones and a unique beta chain/FSHB shown here.

Its subcellular location is the secreted. Functionally, together with the alpha chain CGA constitutes follitropin, the follicle-stimulating hormone, and provides its biological specificity to the hormone heterodimer. Binds FSHR, a G protein-coupled receptor, on target cells to activate downstream signaling pathways. Follitropin is involved in follicle development and spermatogenesis in reproductive organs. The chain is Follitropin subunit beta (FSHB) from Aotus nancymaae (Ma's night monkey).